The following is a 491-amino-acid chain: Proline--tRNA ligase (491 aa).

This sequence belongs to the class-II aminoacyl-tRNA synthetase family. ProS type 3 subfamily. As to quaternary structure, homodimer.

It is found in the cytoplasm. It catalyses the reaction tRNA(Pro) + L-proline + ATP = L-prolyl-tRNA(Pro) + AMP + diphosphate. Functionally, catalyzes the attachment of proline to tRNA(Pro) in a two-step reaction: proline is first activated by ATP to form Pro-AMP and then transferred to the acceptor end of tRNA(Pro). This Cytophaga hutchinsonii (strain ATCC 33406 / DSM 1761 / CIP 103989 / NBRC 15051 / NCIMB 9469 / D465) protein is Proline--tRNA ligase.